We begin with the raw amino-acid sequence, 153 residues long: Salivary C-type lectin 1 (153 aa).

An N-terminal signal peptide occupies residues 1–19 (MIFSLYLIVAISLADLTAA). Residues 26-151 (KNRFCFPNVV…CSSTRRFVCE (126 aa)) enclose the C-type lectin domain. 2 disulfide bridges follow: Cys45–Cys150 and Cys122–Cys142.

The cofactor is Ca(2+). As to expression, expressed in female salivary gland. Not detected or low-level expression in female midgut and fat body.

It localises to the secreted. Salivary protein with carbohydrate-binding activity; exibits high affinity for D-mannose. Agglutinates host erythrocytes. Probably participates in mosquito innate immune responses to prevent microorganism multiplication in sugar and blood meals. Functionally, (Microbial infection) Agglutinates Staphylococcus aureus in vitro. In terms of biological role, (Microbial infection) Agglutinates Candida albicans in vitro. Its function is as follows. (Microbial infection) Does not agglutinate Escherichia coli in vitro. The chain is Salivary C-type lectin 1 from Aedes albopictus (Asian tiger mosquito).